Reading from the N-terminus, the 351-residue chain is Glycerol-3-phosphate dehydrogenase 1-like protein (351 aa).

An NAD(+)-binding site is contributed by Gly12–Gly17. Lys122 lines the substrate pocket. Ala155 provides a ligand contact to NAD(+). Lys206 functions as the Proton acceptor in the catalytic mechanism. Arg271, Lys298, and Gln300 together coordinate NAD(+). Substrate is bound at residue Arg271–Asn272.

It belongs to the NAD-dependent glycerol-3-phosphate dehydrogenase family. Interacts with SCN5A. In terms of tissue distribution, most highly expressed in heart tissue, with lower levels in the skeletal muscle, kidney, lung and other organs.

Its subcellular location is the cytoplasm. It catalyses the reaction sn-glycerol 3-phosphate + NAD(+) = dihydroxyacetone phosphate + NADH + H(+). Plays a role in regulating cardiac sodium current; decreased enzymatic activity with resulting increased levels of glycerol 3-phosphate activating the DPD1L-dependent SCN5A phosphorylation pathway, may ultimately lead to decreased sodium current; cardiac sodium current may also be reduced due to alterations of NAD(H) balance induced by DPD1L. In Homo sapiens (Human), this protein is Glycerol-3-phosphate dehydrogenase 1-like protein.